Reading from the N-terminus, the 319-residue chain is Taste receptor type 2 member 30 (319 aa).

A topological domain (extracellular) is located at residue methionine 1. Residues isoleucine 2 to phenylalanine 22 traverse the membrane as a helical segment. Over alanine 23 to glutamine 46 the chain is Cytoplasmic. The helical transmembrane segment at isoleucine 47–tyrosine 67 threads the bilayer. Over alanine 68–asparagine 86 the chain is Extracellular. Residues valine 87–leucine 107 form a helical membrane-spanning segment. Residues leucine 108 to lysine 126 lie on the Cytoplasmic side of the membrane. Residues serine 127–isoleucine 147 form a helical membrane-spanning segment. Residues asparagine 148–threonine 178 lie on the Extracellular side of the membrane. 2 N-linked (GlcNAc...) asparagine glycosylation sites follow: asparagine 161 and asparagine 176. Residues leucine 179–isoleucine 199 form a helical membrane-spanning segment. Residues cysteine 200–glutamine 229 lie on the Cytoplasmic side of the membrane. Residues threonine 230–cysteine 250 form a helical membrane-spanning segment. The Extracellular portion of the chain corresponds to asparagine 251 to proline 259. A helical transmembrane segment spans residues valine 260–isoleucine 280. Residues leucine 281–glycine 319 lie on the Cytoplasmic side of the membrane.

Belongs to the G-protein coupled receptor T2R family.

It is found in the membrane. In terms of biological role, receptor that may play a role in the perception of bitterness and is gustducin-linked. May play a role in sensing the chemical composition of the gastrointestinal content. The activity of this receptor may stimulate alpha gustducin, mediate PLC-beta-2 activation and lead to the gating of TRPM5. This chain is Taste receptor type 2 member 30 (TAS2R30), found in Pan troglodytes (Chimpanzee).